Here is a 177-residue protein sequence, read N- to C-terminus: Inner membrane-spanning protein YciB (177 aa).

The next 5 helical transmembrane spans lie at 23–43 (MFVATGVAIAATAVMVAWAWF), 50–70 (TMQWISLGLIVVLGGATLLLH), 73–93 (HFIMWKPTVLYWVMGAGLLIS), 119–139 (LTWAWSGFFAFMGALNLFVAY), and 149–169 (FKLFGGMGLMLLFVIAQSLFL).

Belongs to the YciB family.

The protein localises to the cell inner membrane. Functionally, plays a role in cell envelope biogenesis, maintenance of cell envelope integrity and membrane homeostasis. The chain is Inner membrane-spanning protein YciB from Chromobacterium violaceum (strain ATCC 12472 / DSM 30191 / JCM 1249 / CCUG 213 / NBRC 12614 / NCIMB 9131 / NCTC 9757 / MK).